Consider the following 416-residue polypeptide: Fusaric acid cluster transcription factor FUB10 (416 aa).

Residues 16–47 (CDRCRAQKLRCHRDSGHSTDACLRCLKSGIEC) constitute a DNA-binding region (zn(2)-C6 fungal-type). Residues 50–92 (SKARPTGRPPSRQVQPTVSVEQGDTSSSSHTTDSSPSAGGTDI) are disordered. The span at 61-73 (RQVQPTVSVEQGD) shows a compositional bias: polar residues. The span at 74-86 (TSSSSHTTDSSPS) shows a compositional bias: low complexity.

It localises to the nucleus. In terms of biological role, transcription factor that regulates the expression of the gene cluster that mediates the biosynthesis of fusaric acid, a mycotoxin with low to moderate toxicity to animals and humans, but with high phytotoxic properties. In Fusarium oxysporum f. sp. lycopersici (strain 4287 / CBS 123668 / FGSC 9935 / NRRL 34936) (Fusarium vascular wilt of tomato), this protein is Fusaric acid cluster transcription factor FUB10.